The following is a 700-amino-acid chain: Lutropin-choriogonadotropic hormone receptor (700 aa).

The signal sequence occupies residues 1–26; sequence MGRRVPALRQLLVLAMLVLKQSQLHS. The Extracellular portion of the chain corresponds to 27–362; it reads PELSGSRCPE…AFNPCEDIMG (336 aa). Residues 52–75 form an LRR 1 repeat; it reads RAGLARLSLTYLPVKVIPSQAFRG. Residue N103 is glycosylated (N-linked (GlcNAc...) asparagine). 3 LRR repeats span residues 126–150, 176–200, and 225–248; these read LPRL…KISS, MNNE…AFNG, and ATGP…GLES. 2 N-linked (GlcNAc...) asparagine glycosylation sites follow: N178 and N199. 3 N-linked (GlcNAc...) asparagine glycosylation sites follow: N295, N303, and N317. Y335 bears the Sulfotyrosine mark. A helical transmembrane segment spans residues 363–390; that stretch reads YAFLRVLIWLINILAIFGNLTVLFVLLT. The Cytoplasmic portion of the chain corresponds to 391-399; that stretch reads SRYKLTVPR. The helical transmembrane segment at 400 to 422 threads the bilayer; sequence FLMCNLSFADFCMGLYLLLIASV. Topologically, residues 423–443 are extracellular; the sequence is DSQTKGQYYNHAIDWQTGSGC. A disulfide bridge connects residues C443 and C518. Residues 444–466 traverse the membrane as a helical segment; the sequence is SAAGFFTVFASELSVYTLTVITL. Residues 467–486 lie on the Cytoplasmic side of the membrane; sequence ERWHTITYAVQLDQKLRLRH. Residues 487–509 traverse the membrane as a helical segment; the sequence is AIPIMLGGWIFSTLMATLPLVGV. Residues 510–529 are Extracellular-facing; the sequence is SSYMKVSICLPMDVESTLSQ. The chain crosses the membrane as a helical span at residues 530–551; sequence VYILSILLLNAVAFVVICACYV. Over 552–574 the chain is Cytoplasmic; sequence RIYFAVQNPELTAPNKDTKIAKK. Residues 575-598 traverse the membrane as a helical segment; sequence MAILIFTDFTCMAPISFFAISAAF. Topologically, residues 599 to 609 are extracellular; the sequence is KVPLITVTNSK. The chain crosses the membrane as a helical span at residues 610-631; it reads VLLVLFYPVNSCANPFLYAVFT. Residues 632-700 lie on the Cytoplasmic side of the membrane; the sequence is KAFQRDFFLL…QPTPPRVLIQ (69 aa). S-palmitoyl cysteine attachment occurs at residues C647 and C648.

It belongs to the G-protein coupled receptor 1 family. FSH/LSH/TSH subfamily. Post-translationally, sulfated.

The protein resides in the cell membrane. Its function is as follows. Receptor for lutropin-choriogonadotropic hormone. The activity of this receptor is mediated by G proteins which activate adenylate cyclase. The sequence is that of Lutropin-choriogonadotropic hormone receptor (Lhcgr) from Mus musculus (Mouse).